Reading from the N-terminus, the 339-residue chain is Serpentine receptor class alpha-22 (339 aa).

Helical transmembrane passes span 33 to 53, 110 to 130, 150 to 170, 199 to 219, 250 to 270, and 284 to 304; these read IFIS…IQAL, VVDL…VFSL, FIAI…FYIA, VRTM…YLSV, IFII…NLLL, and IALF…VIYF.

It belongs to the nematode receptor-like protein sra family.

The protein localises to the membrane. The sequence is that of Serpentine receptor class alpha-22 (sra-22) from Caenorhabditis elegans.